Reading from the N-terminus, the 250-residue chain is Cell division protein ZapD (250 aa).

Belongs to the ZapD family. In terms of assembly, interacts with FtsZ.

Its subcellular location is the cytoplasm. Its function is as follows. Cell division factor that enhances FtsZ-ring assembly. Directly interacts with FtsZ and promotes bundling of FtsZ protofilaments, with a reduction in FtsZ GTPase activity. This Photorhabdus laumondii subsp. laumondii (strain DSM 15139 / CIP 105565 / TT01) (Photorhabdus luminescens subsp. laumondii) protein is Cell division protein ZapD.